The primary structure comprises 273 residues: Aegyptin (273 aa).

Residues 1–19 (MKPLVKLFLLFCLVGIVLS) form the signal peptide. Residues 20 to 160 (RPMPEDEEPV…SEKNDPADTY (141 aa)) are disordered. Residues 24–62 (EDEEPVAEGGDDDASGESEGEEETTDDAGGDGGEEENEG) show a composition bias toward acidic residues. Residues 63 to 86 (EEHAGDKDAGGEDTGKEENTGHDD) are compositionally biased toward basic and acidic residues. Residues 87-145 (AGEEDAGEEDAGEEDAGEEDAGEEDAEKEEGEKEDAGDDAGSDDGEEDSTGGDEGEDNA) are compositionally biased toward acidic residues. The mediates binding of host collagen stretch occupies residues 137–273 (GGDEGEDNAE…IKSCVSSKGR (137 aa)). Residues 146–158 (EDSKGSEKNDPAD) are compositionally biased toward basic and acidic residues. Cystine bridges form between Cys-213/Cys-267 and Cys-235/Cys-245.

The protein belongs to the aegyptin family. As to quaternary structure, monomer; exhibits non-globular elongated shape in solution. Female saliva (at protein level). Adult female salivary gland (at protein level).

The protein localises to the secreted. Functionally, modulates blood feeding of female mosquitoes on vertebrate hosts. Inhibits collagen-induced platelet aggregation in the host via preventing collagen interaction with its three major ligands: glycoprotein VI, integrin alpha-2/beta-1 (ITGA2/ITGB1) and von Willebrand factor (VWF). Prevents collagen-mediated thrombus formation in the host. Binds to host collagens but not to laminin, vitronectin (VTN), fibronectin (FN1), von Willebrand factor (VWF) and fibrinogen. Influences cytokine production and populations of circulating leukocytes. Its function is as follows. (Microbial infection) Reduces replication of dengue virus type 2 at inoculation site and viremia levels on day 2 post-inoculation. Promotes production of pro-inflammatory cytokines, such as GM-CSF (CSF2), IFN-gamma (IFNG), IL5 and IL6, in the lymph nodes of mice infected with dengue virus type 2. Increases the number of circulating eosinophils in mice infected with dengue virus type 2. Decreases the number of circulating monocytes in mice infected with dengue virus type 2. This is Aegyptin from Aedes aegypti (Yellowfever mosquito).